The chain runs to 311 residues: Methionyl-tRNA formyltransferase (311 aa).

Position 112-115 (112-115) interacts with (6S)-5,6,7,8-tetrahydrofolate; the sequence is SLLP.

This sequence belongs to the Fmt family.

The catalysed reaction is L-methionyl-tRNA(fMet) + (6R)-10-formyltetrahydrofolate = N-formyl-L-methionyl-tRNA(fMet) + (6S)-5,6,7,8-tetrahydrofolate + H(+). Attaches a formyl group to the free amino group of methionyl-tRNA(fMet). The formyl group appears to play a dual role in the initiator identity of N-formylmethionyl-tRNA by promoting its recognition by IF2 and preventing the misappropriation of this tRNA by the elongation apparatus. The chain is Methionyl-tRNA formyltransferase from Bradyrhizobium diazoefficiens (strain JCM 10833 / BCRC 13528 / IAM 13628 / NBRC 14792 / USDA 110).